We begin with the raw amino-acid sequence, 138 residues long: Large ribosomal subunit protein eL14B (138 aa).

N-acetylserine is present on Ser2.

This sequence belongs to the eukaryotic ribosomal protein eL14 family. As to quaternary structure, component of the large ribosomal subunit (LSU). Mature yeast ribosomes consist of a small (40S) and a large (60S) subunit. The 40S small subunit contains 1 molecule of ribosomal RNA (18S rRNA) and 33 different proteins (encoded by 57 genes). The large 60S subunit contains 3 rRNA molecules (25S, 5.8S and 5S rRNA) and 46 different proteins (encoded by 81 genes). Post-translationally, N-terminally acetylated by acetyltransferase NatA.

The protein localises to the cytoplasm. Its function is as follows. Component of the ribosome, a large ribonucleoprotein complex responsible for the synthesis of proteins in the cell. The small ribosomal subunit (SSU) binds messenger RNAs (mRNAs) and translates the encoded message by selecting cognate aminoacyl-transfer RNA (tRNA) molecules. The large subunit (LSU) contains the ribosomal catalytic site termed the peptidyl transferase center (PTC), which catalyzes the formation of peptide bonds, thereby polymerizing the amino acids delivered by tRNAs into a polypeptide chain. The nascent polypeptides leave the ribosome through a tunnel in the LSU and interact with protein factors that function in enzymatic processing, targeting, and the membrane insertion of nascent chains at the exit of the ribosomal tunnel. The polypeptide is Large ribosomal subunit protein eL14B (Saccharomyces cerevisiae (strain ATCC 204508 / S288c) (Baker's yeast)).